We begin with the raw amino-acid sequence, 645 residues long: Matrix metalloproteinase-24 (645 aa).

Residues 1-10 are compositionally biased toward low complexity; that stretch reads MPRSRGGRAA. Residues 1-26 are disordered; the sequence is MPRSRGGRAAPGPPPPPPPPGQAPRW. The signal sequence occupies residues 1 to 52; sequence MPRSRGGRAAPGPPPPPPPPGQAPRWSRWRVPGRLLLLLLPALCCLPGAARA. The span at 11-22 shows a compositional bias: pro residues; the sequence is PGPPPPPPPPGQ. Positions 53-155 are excised as a propeptide; sequence AAAAAGAGNR…HLSRRRRNKR (103 aa). Residues 53–602 are Extracellular-facing; the sequence is AAAAAGAGNR…INDVPGSVNA (550 aa). Positions 137–144 match the Cysteine switch motif; it reads PRCGVPDH. Zn(2+) is bound by residues C139 and H282. The active site involves E283. Zn(2+) is bound by residues H286 and H292. The disordered stretch occupies residues 323–380; sequence QKIYGPPAEPLEPTRPLPTLPVRRIHSPSERKHERQPRPPRPPLGDRPSTPGTKPNIC. Residues 329–341 show a composition bias toward pro residues; it reads PAEPLEPTRPLPT. Residues 349–359 are compositionally biased toward basic and acidic residues; the sequence is SPSERKHERQP. 4 Hemopexin repeats span residues 377–425, 426–471, 473–521, and 522–569; these read PNIC…WKGL, PARI…GSCL, REGI…KGIP, and QAPQ…WMGC. An intrachain disulfide couples C380 to C569. A helical membrane pass occupies residues 603–623; the sequence is VAVVIPCILSLCILVLVYTIF. Topologically, residues 624–645 are cytoplasmic; the sequence is QFKNKTGPQPVTYYKRPVQEWV. The PDZ-binding signature appears at 643 to 645; it reads EWV.

This sequence belongs to the peptidase M10A family. As to quaternary structure, interacts (via PDZ-binding motif) with APBA3 (via PDZ domain). Interacts with GRIP1 and GRIP2. The cofactor is Zn(2+). Ca(2+) serves as cofactor. Cleaved by a furin endopeptidase in the trans-Golgi network. As to expression, predominantly expressed in brain, kidney, pancreas and lung. Overexpressed in a series of brain tumors, including astrocytomas and glioblastomas.

Its subcellular location is the cell membrane. It is found in the golgi apparatus. The protein localises to the trans-Golgi network membrane. The protein resides in the secreted. It localises to the extracellular space. Its subcellular location is the extracellular matrix. Metalloprotease that mediates cleavage of N-cadherin (CDH2) and acts as a regulator of neuro-immune interactions and neural stem cell quiescence. Involved in cell-cell interactions between nociceptive neurites and mast cells, possibly by mediating cleavage of CDH2, thereby acting as a mediator of peripheral thermal nociception and inflammatory hyperalgesia. Key regulator of neural stem cells quiescence by mediating cleavage of CDH2, affecting CDH2-mediated anchorage of neural stem cells to ependymocytes in the adult subependymal zone, leading to modulate their quiescence. May play a role in axonal growth. Able to activate progelatinase A. May also be a proteoglycanase involved in degradation of proteoglycans, such as dermatan sulfate and chondroitin sulfate proteoglycans. Cleaves partially fibronectin, but not collagen type I, nor laminin. The protein is Matrix metalloproteinase-24 (MMP24) of Homo sapiens (Human).